The chain runs to 340 residues: UDP-3-O-acylglucosamine N-acyltransferase (340 aa).

The Proton acceptor role is filled by H238.

Belongs to the transferase hexapeptide repeat family. LpxD subfamily. As to quaternary structure, homotrimer.

It catalyses the reaction a UDP-3-O-[(3R)-3-hydroxyacyl]-alpha-D-glucosamine + a (3R)-hydroxyacyl-[ACP] = a UDP-2-N,3-O-bis[(3R)-3-hydroxyacyl]-alpha-D-glucosamine + holo-[ACP] + H(+). It participates in bacterial outer membrane biogenesis; LPS lipid A biosynthesis. Its function is as follows. Catalyzes the N-acylation of UDP-3-O-acylglucosamine using 3-hydroxyacyl-ACP as the acyl donor. Is involved in the biosynthesis of lipid A, a phosphorylated glycolipid that anchors the lipopolysaccharide to the outer membrane of the cell. This is UDP-3-O-acylglucosamine N-acyltransferase from Shewanella denitrificans (strain OS217 / ATCC BAA-1090 / DSM 15013).